The chain runs to 334 residues: HTH-type transcriptional repressor PurR (334 aa).

The HTH lacI-type domain maps to 2-56 (ATIKDVAKMAGVSTTTVSHVINKTRFVAAETEKLVLQAIQELNYSPSAVARSLKV). The H-T-H motif DNA-binding region spans 4 to 23 (IKDVAKMAGVSTTTVSHVIN). Residues 48-56 (SAVARSLKV) mediate DNA binding. Residues Tyr-73, Lys-189, Thr-191, Phe-220, and Asp-274 each coordinate hypoxanthine.

As to quaternary structure, homodimer.

Its pathway is purine metabolism; purine nucleotide biosynthesis [regulation]. In terms of biological role, is the main repressor of the genes involved in the de novo synthesis of purine nucleotides, regulating purB, purC, purEK, purF, purHD, purL, purMN and guaBA expression. PurR is allosterically activated to bind its cognate DNA by binding the purine corepressors, hypoxanthine or guanine, thereby effecting transcription repression. The polypeptide is HTH-type transcriptional repressor PurR (Pasteurella multocida (strain Pm70)).